The primary structure comprises 277 residues: Putative pyruvate, phosphate dikinase regulatory protein (277 aa).

151–158 (GISRTSKT) is an ADP binding site.

Belongs to the pyruvate, phosphate/water dikinase regulatory protein family. PDRP subfamily.

The catalysed reaction is N(tele)-phospho-L-histidyl/L-threonyl-[pyruvate, phosphate dikinase] + ADP = N(tele)-phospho-L-histidyl/O-phospho-L-threonyl-[pyruvate, phosphate dikinase] + AMP + H(+). The enzyme catalyses N(tele)-phospho-L-histidyl/O-phospho-L-threonyl-[pyruvate, phosphate dikinase] + phosphate + H(+) = N(tele)-phospho-L-histidyl/L-threonyl-[pyruvate, phosphate dikinase] + diphosphate. Bifunctional serine/threonine kinase and phosphorylase involved in the regulation of the pyruvate, phosphate dikinase (PPDK) by catalyzing its phosphorylation/dephosphorylation. The protein is Putative pyruvate, phosphate dikinase regulatory protein of Alkaliphilus metalliredigens (strain QYMF).